The following is a 182-amino-acid chain: Pyruvoyl-dependent arginine decarboxylase (182 aa).

Pyruvic acid (Ser) is present on Ser44.

This sequence belongs to the PdaD family. Requires pyruvate as cofactor.

It carries out the reaction L-arginine + H(+) = agmatine + CO2. The sequence is that of Pyruvoyl-dependent arginine decarboxylase from Picrophilus torridus (strain ATCC 700027 / DSM 9790 / JCM 10055 / NBRC 100828 / KAW 2/3).